The primary structure comprises 345 residues: N-acetyl-gamma-glutamyl-phosphate reductase (345 aa).

Cysteine 149 is an active-site residue.

Belongs to the NAGSA dehydrogenase family. Type 1 subfamily.

The protein resides in the cytoplasm. The enzyme catalyses N-acetyl-L-glutamate 5-semialdehyde + phosphate + NADP(+) = N-acetyl-L-glutamyl 5-phosphate + NADPH + H(+). Its pathway is amino-acid biosynthesis; L-arginine biosynthesis; N(2)-acetyl-L-ornithine from L-glutamate: step 3/4. In terms of biological role, catalyzes the NADPH-dependent reduction of N-acetyl-5-glutamyl phosphate to yield N-acetyl-L-glutamate 5-semialdehyde. This Bacillus cereus (strain AH187) protein is N-acetyl-gamma-glutamyl-phosphate reductase.